A 342-amino-acid polypeptide reads, in one-letter code: Ribosomal RNA small subunit methyltransferase C (342 aa).

This sequence belongs to the methyltransferase superfamily. RsmC family. Monomer.

The protein resides in the cytoplasm. It carries out the reaction guanosine(1207) in 16S rRNA + S-adenosyl-L-methionine = N(2)-methylguanosine(1207) in 16S rRNA + S-adenosyl-L-homocysteine + H(+). In terms of biological role, specifically methylates the guanine in position 1207 of 16S rRNA in the 30S particle. This is Ribosomal RNA small subunit methyltransferase C from Salmonella paratyphi A (strain ATCC 9150 / SARB42).